Consider the following 345-residue polypeptide: Probable velvet family sexual development regulator LACBIDRAFT_317102 (345 aa).

Polar residues-rich tracts occupy residues 1–13 (MFTT…SYRS) and 24–38 (EIQN…NPPR). 3 disordered regions span residues 1–43 (MFTT…TRRR), 138–189 (ESWT…SPSS), and 310–345 (RKRR…SDED). The Velvet domain occupies 62–306 (GQTIRAELDE…ARWGVRLNIR (245 aa)). Low complexity-rich tracts occupy residues 141–158 (TSRS…PTLS) and 167–184 (SSPQ…ASTP). Over residues 336-345 (SEDDEASDED) the composition is skewed to acidic residues.

This sequence belongs to the velvet family.

The protein localises to the nucleus. Its function is as follows. Velvet-domain-containing protein that probably acts as a positive regulator of sexual development. The sequence is that of Probable velvet family sexual development regulator LACBIDRAFT_317102 from Laccaria bicolor (strain S238N-H82 / ATCC MYA-4686) (Bicoloured deceiver).